The sequence spans 148 residues: UPF0756 membrane protein YeaL (148 aa).

Helical transmembrane passes span 14 to 34, 51 to 71, 86 to 106, and 121 to 141; these read ALGF…LIIV, LSIG…SGTL, LVAI…VTLM, and VLGV…AGLV.

The protein belongs to the UPF0756 family.

Its subcellular location is the cell membrane. This is UPF0756 membrane protein YeaL from Escherichia coli O127:H6 (strain E2348/69 / EPEC).